A 156-amino-acid chain; its full sequence is ATP synthase subunit b (156 aa).

The chain crosses the membrane as a helical span at residues 7-27 (LVAQMVVFFILWWVVAKFIWP).

Belongs to the ATPase B chain family. F-type ATPases have 2 components, F(1) - the catalytic core - and F(0) - the membrane proton channel. F(1) has five subunits: alpha(3), beta(3), gamma(1), delta(1), epsilon(1). F(0) has three main subunits: a(1), b(2) and c(10-14). The alpha and beta chains form an alternating ring which encloses part of the gamma chain. F(1) is attached to F(0) by a central stalk formed by the gamma and epsilon chains, while a peripheral stalk is formed by the delta and b chains.

It localises to the cell inner membrane. F(1)F(0) ATP synthase produces ATP from ADP in the presence of a proton or sodium gradient. F-type ATPases consist of two structural domains, F(1) containing the extramembraneous catalytic core and F(0) containing the membrane proton channel, linked together by a central stalk and a peripheral stalk. During catalysis, ATP synthesis in the catalytic domain of F(1) is coupled via a rotary mechanism of the central stalk subunits to proton translocation. In terms of biological role, component of the F(0) channel, it forms part of the peripheral stalk, linking F(1) to F(0). The sequence is that of ATP synthase subunit b from Ralstonia pickettii (strain 12J).